Here is a 2485-residue protein sequence, read N- to C-terminus: Probable polyketide synthase 10 (2485 aa).

The 440-residue stretch at 8–447 (EDDIAIIGVG…GANCCIILSE (440 aa)) folds into the Ketosynthase family 3 (KS3) domain. Catalysis depends on for beta-ketoacyl synthase activity residues cysteine 184, histidine 325, and histidine 363. An acyl/malonyl transferase region spans residues 636-669 (GIEASFIVGHSLGEISAAHCSGMIDLETLCYIIY). Serine 646 serves as the catalytic For acyl/malonyl transferase activity. Residues 930-1054 (PPITILGNES…GNFHISNNLF (125 aa)) form an N-terminal hotdog fold region. A PKS/mFAS DH domain is found at 930 to 1220 (PPITILGNES…SKSLTPIQDP (291 aa)). Histidine 964 acts as the Proton acceptor; for dehydratase activity in catalysis. Positions 1071–1220 (NYSLIERDDL…SKSLTPIQDP (150 aa)) are C-terminal hotdog fold. Aspartate 1134 serves as the catalytic Proton donor; for dehydratase activity. The Carrier domain occupies 2410–2485 (ESNKGIDGLL…NQLIKFLNKK (76 aa)). Position 2447 is an O-(pantetheine 4'-phosphoryl)serine (serine 2447).

Pantetheine 4'-phosphate is required as a cofactor.

In terms of biological role, probable polyketide synthase. The polypeptide is Probable polyketide synthase 10 (pks10) (Dictyostelium discoideum (Social amoeba)).